We begin with the raw amino-acid sequence, 232 residues long: Chaperone protein CssC (232 aa).

The signal sequence occupies residues 1 to 20 (MKSKLIILLTLVPFSSFSTG).

The protein belongs to the periplasmic pilus chaperone family.

It localises to the periplasm. Involved in the biogenesis of the CS6 fimbria. This chain is Chaperone protein CssC (cssC), found in Escherichia coli.